We begin with the raw amino-acid sequence, 352 residues long: Large ribosomal subunit protein uL10 (352 aa).

The span at 286 to 297 (DDEDALPEELQD) shows a compositional bias: acidic residues. The tract at residues 286-352 (DDEDALPEEL…GAEGLGEMFG (67 aa)) is disordered. Over residues 299–310 (DAPAAPAGGEAD) the composition is skewed to low complexity. Residues 324-340 (EADDADDSDDDDDDDDG) show a composition bias toward acidic residues. The span at 343 to 352 (GAEGLGEMFG) shows a compositional bias: gly residues.

This sequence belongs to the universal ribosomal protein uL10 family. As to quaternary structure, part of the 50S ribosomal subunit. Forms part of the ribosomal stalk which helps the ribosome interact with GTP-bound translation factors. Forms a heptameric L10(L12)2(L12)2(L12)2 complex, where L10 forms an elongated spine to which the L12 dimers bind in a sequential fashion.

Functionally, forms part of the ribosomal stalk, playing a central role in the interaction of the ribosome with GTP-bound translation factors. The polypeptide is Large ribosomal subunit protein uL10 (Halobacterium salinarum (strain ATCC 700922 / JCM 11081 / NRC-1) (Halobacterium halobium)).